The chain runs to 337 residues: Cytoskeleton protein RodZ (337 aa).

Residues 1-111 (MNTEATHDQN…LGKRRKKRDG (111 aa)) are Cytoplasmic-facing. One can recognise an HTH cro/C1-type domain in the interval 19-71 (LRNAREQLGLSQQAVAERLCLKVSTVRDIEEDKAPADLASTFLRGYIRSYARL). The H-T-H motif DNA-binding region spans 30 to 49 (QQAVAERLCLKVSTVRDIEE). The chain crosses the membrane as a helical; Signal-anchor for type II membrane protein span at residues 112–132 (WLMTFTWLVLFVVIGLSGAWW). Residues 133 to 337 (WQDHKAQQEE…TLNAEQSPAQ (205 aa)) are Periplasmic-facing. Residues 145–167 (TMADQSSAELSSNSEQGQSVPLN) are compositionally biased toward polar residues. The tract at residues 145–237 (TMADQSSAEL…ATTTPDGAAP (93 aa)) is disordered. Residues 168 to 207 (TSTTTDPATTSTPPASVDTTATNTQTPAVTAPAPAVDPQQ) show a composition bias toward low complexity. A compositionally biased stretch (polar residues) spans 208-218 (NAVVSPSQANV). A compositionally biased stretch (low complexity) spans 219–237 (DTAATPAPTATTTPDGAAP).

Belongs to the RodZ family.

The protein resides in the cell inner membrane. Functionally, cytoskeletal protein that is involved in cell-shape control through regulation of the length of the long axis. The protein is Cytoskeleton protein RodZ of Escherichia coli (strain 55989 / EAEC).